Consider the following 589-residue polypeptide: DNA mismatch repair protein MutL (589 aa).

2 disordered regions span residues 330-355 (LQRR…SHRE) and 374-394 (RIYE…SEPT). A compositionally biased stretch (basic and acidic residues) spans 331 to 341 (QRREAPQRPEP). Positions 381 to 390 (PYRPPEPPAA) are enriched in pro residues.

Belongs to the DNA mismatch repair MutL/HexB family.

In terms of biological role, this protein is involved in the repair of mismatches in DNA. It is required for dam-dependent methyl-directed DNA mismatch repair. May act as a 'molecular matchmaker', a protein that promotes the formation of a stable complex between two or more DNA-binding proteins in an ATP-dependent manner without itself being part of a final effector complex. The polypeptide is DNA mismatch repair protein MutL (Trichlorobacter lovleyi (strain ATCC BAA-1151 / DSM 17278 / SZ) (Geobacter lovleyi)).